The chain runs to 171 residues: Large ribosomal subunit protein uL10 (171 aa).

This sequence belongs to the universal ribosomal protein uL10 family. In terms of assembly, part of the ribosomal stalk of the 50S ribosomal subunit. The N-terminus interacts with L11 and the large rRNA to form the base of the stalk. The C-terminus forms an elongated spine to which L12 dimers bind in a sequential fashion forming a multimeric L10(L12)X complex.

In terms of biological role, forms part of the ribosomal stalk, playing a central role in the interaction of the ribosome with GTP-bound translation factors. The chain is Large ribosomal subunit protein uL10 from Corynebacterium efficiens (strain DSM 44549 / YS-314 / AJ 12310 / JCM 11189 / NBRC 100395).